We begin with the raw amino-acid sequence, 320 residues long: MKNLKKKLTLTGLMTAGLLFLSGCVQTHVVDGVRVPTEAATHGITYNFLVRPMSAFVDLFANNLHMGYGWGIIFVTLIIRFLILPLGLNQAYKSTYMQEKMAYLAPVFAPLQERLKKAQTPEEKMAAQQALMAAQKDNGINMLSSIGCLPMLIQWPFFIALYNAAAYTTGISSSTFYGIPLGHPSVVLVIISGVLYFIQTWISTLSMTPEQKKSGMAMLIMSPAMIVVFSFMSPAGVALYWAVGGFVIVIQQIIITFIMKPRMRRRIDEEFTKNPPKINNEGLKDVTPTSVQENFKEITSERNEKERKSGGRNAGKQNRK.

An N-terminal signal peptide occupies residues Met1 to Gly23. A lipid anchor (N-palmitoyl cysteine) is attached at Cys24. Cys24 is lipidated: S-diacylglycerol cysteine. 5 helical membrane passes run Tyr68–Leu88, Met142–Tyr162, Gly178–Ile198, Ala217–Val237, and Leu239–Met259. The segment at Glu270–Lys320 is disordered. Over residues Asn294–Ser309 the composition is skewed to basic and acidic residues.

It belongs to the OXA1/ALB3/YidC family. Type 2 subfamily.

The protein localises to the cell membrane. Required for the insertion and/or proper folding and/or complex formation of integral membrane proteins into the membrane. Involved in integration of membrane proteins that insert both dependently and independently of the Sec translocase complex, as well as at least some lipoproteins. The protein is Membrane protein insertase YidC 2 of Lactococcus lactis subsp. lactis (strain IL1403) (Streptococcus lactis).